We begin with the raw amino-acid sequence, 838 residues long: Alpha-glucan phosphorylase, H isozyme (838 aa).

The interval 1–21 (MEGGAKSNDVSAAPIAQPLSE) is disordered. Lysine 684 is modified (N6-(pyridoxal phosphate)lysine).

It belongs to the glycogen phosphorylase family. The cofactor is pyridoxal 5'-phosphate.

Its subcellular location is the cytoplasm. It catalyses the reaction [(1-&gt;4)-alpha-D-glucosyl](n) + phosphate = [(1-&gt;4)-alpha-D-glucosyl](n-1) + alpha-D-glucose 1-phosphate. In terms of biological role, phosphorylase is an important allosteric enzyme in carbohydrate metabolism. Enzymes from different sources differ in their regulatory mechanisms and in their natural substrates. However, all known phosphorylases share catalytic and structural properties. The chain is Alpha-glucan phosphorylase, H isozyme from Solanum tuberosum (Potato).